Consider the following 1092-residue polypeptide: Elongation factor 3 (1092 aa).

Valine 92 provides a ligand contact to ADP. HEAT repeat units lie at residues 95-133 (MVKTKILHGIATGLHNTKQPVAREGAITAIETLIKSPVS), 138-175 (PYMITFIPVLLERLSDKAKTVCLAADSALKALITRLTP), 177-214 (ATKQVLPLLLAGIEYSQKWQTKVGALELMQSLSKTAPR), 218-255 (TAVPDLVPPLSEVMHDTKAEAKNAGRQTMEAICELINN), 257-293 (DIEKFIPALIDTIANPEKVPDTVHLLGATTFVSEVLP), 294-331 (PTLAIMVPLLSRGLNERQTAIKRKAAVIIINMCKLVEK), and 333-370 (QIIAPFLPRLLPTLEKIQDDVADPECRQVCQNATKILT). Glutamate 454 is a binding site for ADP. ABC transporter domains follow at residues 486-704 (EELC…YYEL) and 730-1044 (LKVQ…DKNK). The ADP site is built by asparagine 766, glutamate 973, asparagine 976, and histidine 1002. 2 disordered regions span residues 1023-1044 (TPTGHNWVSGQGSGPRLEDKNK) and 1063-1092 (SKLSGKDLRKKRKEREARRKRGEEVSDDDE). A compositionally biased stretch (basic residues) spans 1063 to 1075 (SKLSGKDLRKKRK). Residues 1076–1086 (EREARRKRGEE) show a composition bias toward basic and acidic residues.

The protein belongs to the ABC transporter superfamily. ABCF family. EF3 subfamily.

The protein localises to the cytoplasm. It localises to the cytosol. The catalysed reaction is ATP + H2O = ADP + phosphate + H(+). Its pathway is protein biosynthesis; polypeptide chain elongation. Ribosome-dependent ATPase that functions in cytoplasmic translation elongation. Required for the ATP-dependent release of deacylated tRNA from the ribosomal E-site during protein biosynthesis. Stimulates the eEF1A-dependent binding of aminoacyl-tRNA to the ribosomal A-site, which has reduced affinity for tRNA as long as the E-site is occupied. Assists translation termination by stimulating the release of nascent protein from the ribosome by release factors. This Gonapodya prolifera (strain JEL478) (Monoblepharis prolifera) protein is Elongation factor 3.